Reading from the N-terminus, the 512-residue chain is Probable DNA ligase (512 aa).

An ATP-binding site is contributed by E208. The N6-AMP-lysine intermediate role is filled by K210. ATP-binding residues include R215, R230, E259, F299, R374, and K380.

Belongs to the ATP-dependent DNA ligase family. Requires Mg(2+) as cofactor.

The catalysed reaction is ATP + (deoxyribonucleotide)n-3'-hydroxyl + 5'-phospho-(deoxyribonucleotide)m = (deoxyribonucleotide)n+m + AMP + diphosphate.. Its function is as follows. DNA ligase that seals nicks in double-stranded DNA during DNA replication, DNA recombination and DNA repair. In Streptomyces avermitilis (strain ATCC 31267 / DSM 46492 / JCM 5070 / NBRC 14893 / NCIMB 12804 / NRRL 8165 / MA-4680), this protein is Probable DNA ligase.